Here is a 412-residue protein sequence, read N- to C-terminus: Multifunctional CCA protein (412 aa).

2 residues coordinate ATP: Gly-8 and Arg-11. The CTP site is built by Gly-8 and Arg-11. Mg(2+) contacts are provided by Glu-21 and Asp-23. ATP contacts are provided by Arg-91, Arg-137, and Arg-140. CTP is bound by residues Arg-91, Arg-137, and Arg-140. Residues 228 to 329 form the HD domain; it reads CGIHTLMSLQ…WRLLQRLDVL (102 aa).

It belongs to the tRNA nucleotidyltransferase/poly(A) polymerase family. Bacterial CCA-adding enzyme type 1 subfamily. Monomer. Can also form homodimers and oligomers. It depends on Mg(2+) as a cofactor. Ni(2+) is required as a cofactor.

The enzyme catalyses a tRNA precursor + 2 CTP + ATP = a tRNA with a 3' CCA end + 3 diphosphate. It carries out the reaction a tRNA with a 3' CCA end + 2 CTP + ATP = a tRNA with a 3' CCACCA end + 3 diphosphate. In terms of biological role, catalyzes the addition and repair of the essential 3'-terminal CCA sequence in tRNAs without using a nucleic acid template. Adds these three nucleotides in the order of C, C, and A to the tRNA nucleotide-73, using CTP and ATP as substrates and producing inorganic pyrophosphate. tRNA 3'-terminal CCA addition is required both for tRNA processing and repair. Also involved in tRNA surveillance by mediating tandem CCA addition to generate a CCACCA at the 3' terminus of unstable tRNAs. While stable tRNAs receive only 3'-terminal CCA, unstable tRNAs are marked with CCACCA and rapidly degraded. The protein is Multifunctional CCA protein of Acinetobacter baumannii (strain AB307-0294).